Here is a 473-residue protein sequence, read N- to C-terminus: Ribulose bisphosphate carboxylase large chain (473 aa).

Lys-8 carries the N6,N6,N6-trimethyllysine modification. Positions 117 and 167 each coordinate substrate. Lys-169 (proton acceptor) is an active-site residue. Lys-171 is a binding site for substrate. 3 residues coordinate Mg(2+): Lys-195, Asp-197, and Glu-198. Lys-195 carries the post-translational modification N6-carboxylysine. The active-site Proton acceptor is the His-288. Substrate is bound by residues Arg-289, His-321, and Ser-373.

The protein belongs to the RuBisCO large chain family. Type I subfamily. In terms of assembly, heterohexadecamer of 8 large chains and 8 small chains; disulfide-linked. The disulfide link is formed within the large subunit homodimers. The cofactor is Mg(2+). Post-translationally, the disulfide bond which can form in the large chain dimeric partners within the hexadecamer appears to be associated with oxidative stress and protein turnover.

It is found in the plastid. It localises to the chloroplast. The enzyme catalyses 2 (2R)-3-phosphoglycerate + 2 H(+) = D-ribulose 1,5-bisphosphate + CO2 + H2O. It catalyses the reaction D-ribulose 1,5-bisphosphate + O2 = 2-phosphoglycolate + (2R)-3-phosphoglycerate + 2 H(+). RuBisCO catalyzes two reactions: the carboxylation of D-ribulose 1,5-bisphosphate, the primary event in carbon dioxide fixation, as well as the oxidative fragmentation of the pentose substrate in the photorespiration process. Both reactions occur simultaneously and in competition at the same active site. In Amorphophallus titanum (Titan arum), this protein is Ribulose bisphosphate carboxylase large chain.